The following is a 395-amino-acid chain: Chalcone synthase (395 aa).

N-acetylvaline is present on V2. V2 is modified (N-acetylalanine). C169 is a catalytic residue.

The protein belongs to the thiolase-like superfamily. Chalcone/stilbene synthases family.

It carries out the reaction (E)-4-coumaroyl-CoA + 3 malonyl-CoA + 3 H(+) = 2',4,4',6'-tetrahydroxychalcone + 3 CO2 + 4 CoA. It functions in the pathway secondary metabolite biosynthesis; flavonoid biosynthesis. Functionally, the primary product of this enzyme is 4,2',4',6'-tetrahydroxychalcone (also termed naringenin-chalcone or chalcone) which can under specific conditions spontaneously isomerize into naringenin. This Arabidopsis thaliana (Mouse-ear cress) protein is Chalcone synthase (CHS).